The following is a 229-amino-acid chain: Non-structural protein P8 (229 aa).

Helical transmembrane passes span 119–139 and 162–182; these read IIHM…VCTL and SLNP…MVCA.

It belongs to the orbivirus NS3 family. Forms homooligomers via coiled-coil motif. Interacts with host OPTN; this interaction inhibits innate immune response.

The protein localises to the host cell membrane. It localises to the host Golgi apparatus. Plays a role in the inhibition of host innate immune response. Interacts with host OPTN and thus inhibits the recruitment of TBK1 to the host Golgi apparatus. In turn, downstream partner IRF3 cannot be activated and IFN-beta production is impaired. In terms of biological role, facilitates viral particle release either by increasing plasma membrane permeability through a viroporin-like activity or by viral budding. The sequence is that of Non-structural protein P8 (Segment-10) from Bluetongue virus 17 (isolate USA) (BTV 17).